The sequence spans 362 residues: Peptide chain release factor 1 (362 aa).

N5-methylglutamine is present on Gln237. The segment covering 285-295 (EEKRHAEEAST) has biased composition (basic and acidic residues). Residues 285 to 311 (EEKRHAEEASTRRNLLGSGDRSDRIRT) form a disordered region.

It belongs to the prokaryotic/mitochondrial release factor family. In terms of processing, methylated by PrmC. Methylation increases the termination efficiency of RF1.

Its subcellular location is the cytoplasm. Its function is as follows. Peptide chain release factor 1 directs the termination of translation in response to the peptide chain termination codons UAG and UAA. The sequence is that of Peptide chain release factor 1 from Photobacterium profundum (strain SS9).